A 400-amino-acid polypeptide reads, in one-letter code: Homoserine O-acetyltransferase (400 aa).

Positions methionine 1–aspartate 22 are disordered. The AB hydrolase-1 domain maps to asparagine 64–aspartate 374. The active-site Nucleophile is serine 169. Arginine 239 contacts substrate. Active-site residues include aspartate 335 and histidine 368. Residue aspartate 369 coordinates substrate.

Belongs to the AB hydrolase superfamily. MetX family. Homodimer.

The protein localises to the cytoplasm. The enzyme catalyses L-homoserine + acetyl-CoA = O-acetyl-L-homoserine + CoA. Its pathway is amino-acid biosynthesis; L-methionine biosynthesis via de novo pathway; O-acetyl-L-homoserine from L-homoserine: step 1/1. Functionally, transfers an acetyl group from acetyl-CoA to L-homoserine, forming acetyl-L-homoserine. The sequence is that of Homoserine O-acetyltransferase from Rhodopseudomonas palustris (strain HaA2).